Reading from the N-terminus, the 416-residue chain is 2-aminoadipate transaminase (416 aa).

Pyridoxal 5'-phosphate contacts are provided by residues 102–103 (GA) and Gln233. Lys259 carries the N6-(pyridoxal phosphate)lysine modification. Thr288 provides a ligand contact to pyridoxal 5'-phosphate.

Belongs to the class-III pyridoxal-phosphate-dependent aminotransferase family. Pyridoxal 5'-phosphate is required as a cofactor.

The enzyme catalyses L-2-aminoadipate + 2-oxoglutarate = 2-oxoadipate + L-glutamate. It carries out the reaction 5-aminopentanoate + 2-oxoglutarate = 5-oxopentanoate + L-glutamate. Its pathway is amino-acid degradation. Its function is as follows. Catalyzes the conversion of 2-aminoadipate (2AA) to 2-oxoadipate (2OA). Is most active on L-2-aminoadipate (L-2AA) and shows only weak activity on the enantiomer, D-2-aminoadipate (D-2AA). Shows moderate activity on 5-aminovalerate (5AVA) and weak activity toward 4-aminobutyrate (GABA). Is involved in a D-lysine catabolic pathway. The sequence is that of 2-aminoadipate transaminase from Pseudomonas putida (strain ATCC 47054 / DSM 6125 / CFBP 8728 / NCIMB 11950 / KT2440).